Here is a 315-residue protein sequence, read N- to C-terminus: Probable cytosolic iron-sulfur protein assembly protein CIAO1 homolog (315 aa).

7 WD repeats span residues 11–50 (GHED…WVCK), 56–95 (GHQR…FESC), 100–139 (GHEN…EFEC), 145–188 (CHSQ…CTLD), 189–229 (KHAS…RSWE), 236–275 (RHPR…CSWR), and 283–315 (AHSQ…WQID).

Belongs to the WD repeat CIA1 family.

Essential component of the cytosolic iron-sulfur (Fe/S) protein assembly machinery. Required for the maturation of extramitochondrial Fe/S proteins. The chain is Probable cytosolic iron-sulfur protein assembly protein CIAO1 homolog from Ixodes scapularis (Black-legged tick).